We begin with the raw amino-acid sequence, 296 residues long: 4-hydroxybenzoate octaprenyltransferase (296 aa).

The next 8 membrane-spanning stretches (helical) occupy residues 29 to 49 (AGWL…AGGF), 52 to 72 (WHLL…GCCI), 103 to 123 (LVLG…TNAI), 151 to 171 (VLGV…LGEV), 176 to 196 (WLLM…YAMV), 220 to 240 (VILL…MPYV), 243 to 263 (ALFT…YTLI), and 275 to 295 (FRLN…SYAL).

The protein belongs to the UbiA prenyltransferase family. It depends on Mg(2+) as a cofactor.

It localises to the cell inner membrane. The enzyme catalyses all-trans-octaprenyl diphosphate + 4-hydroxybenzoate = 4-hydroxy-3-(all-trans-octaprenyl)benzoate + diphosphate. The protein operates within cofactor biosynthesis; ubiquinone biosynthesis. Functionally, catalyzes the prenylation of para-hydroxybenzoate (PHB) with an all-trans polyprenyl group. Mediates the second step in the final reaction sequence of ubiquinone-8 (UQ-8) biosynthesis, which is the condensation of the polyisoprenoid side chain with PHB, generating the first membrane-bound Q intermediate 3-octaprenyl-4-hydroxybenzoate. In Albidiferax ferrireducens (strain ATCC BAA-621 / DSM 15236 / T118) (Rhodoferax ferrireducens), this protein is 4-hydroxybenzoate octaprenyltransferase.